Consider the following 429-residue polypeptide: Glucose-6-phosphate isomerase (429 aa).

Glutamate 282 (proton donor) is an active-site residue. Active-site residues include histidine 303 and lysine 418.

This sequence belongs to the GPI family.

Its subcellular location is the cytoplasm. It catalyses the reaction alpha-D-glucose 6-phosphate = beta-D-fructose 6-phosphate. It participates in carbohydrate biosynthesis; gluconeogenesis. The protein operates within carbohydrate degradation; glycolysis; D-glyceraldehyde 3-phosphate and glycerone phosphate from D-glucose: step 2/4. Functionally, catalyzes the reversible isomerization of glucose-6-phosphate to fructose-6-phosphate. In Mesomycoplasma hyopneumoniae (strain 7448) (Mycoplasma hyopneumoniae), this protein is Glucose-6-phosphate isomerase.